Here is a 1537-residue protein sequence, read N- to C-terminus: Adhesion G protein-coupled receptor L3 (1537 aa).

A signal peptide spans 1–19 (MWPPQLLILTMLLAPVVHG). At 20 to 943 (GKHNERHPAL…VKHSDAVHDL (924 aa)) the chain is on the extracellular side. The disordered stretch occupies residues 53-80 (PAAERSTAHRGQGPRGAARGVRGPGAPG). One can recognise an SUEL-type lectin domain in the interval 103 to 192 (SCESYPIELR…KYLEVQYECV (90 aa)). Cystine bridges form between cysteine 104-cysteine 134, cysteine 113-cysteine 191, cysteine 146-cysteine 178, cysteine 159-cysteine 165, and cysteine 203-cysteine 385. N-linked (GlcNAc...) asparagine glycosylation occurs at asparagine 161. One can recognise an Olfactomedin-like domain in the interval 202–461 (LCPGLLKGVY…VVKYSLDFGP (260 aa)). The tract at residues 317–347 (YHDTSPYRWGGKSDIDLAVDENGLWVIYATE) is interaction with FLRT3. Aspartate 332, asparagine 380, alanine 381, and valine 435 together coordinate Ca(2+). Residues 521–540 (RSTTASLPGRRNRSTSTPSP) are disordered. N-linked (GlcNAc...) asparagine glycans are attached at residues asparagine 532, asparagine 617, asparagine 827, asparagine 840, asparagine 885, and asparagine 911. The region spanning 756–935 (DIVRENTDNI…AVLMAHVEVK (180 aa)) is the GAIN-B domain. 2 disulfide bridges follow: cysteine 886–cysteine 917 and cysteine 905–cysteine 919. Residues 886–935 (CSFWSYSKRTMTGYWSTQGCRLLTTNKTHTTCSCNHLTNFAVLMAHVEVK) are GPS. The segment at 923-939 (TNFAVLMAHVEVKHSDA) is stachel. A helical membrane pass occupies residues 944-969 (LLDVITWVGILLSLVCLLICIFTFCF). Residues 970–975 (FRGLQS) are Cytoplasmic-facing. The helical transmembrane segment at 976–999 (DRNTIHKNLCISLFVAELLFLIGI) threads the bilayer. The N-linked (GlcNAc...) asparagine glycan is linked to asparagine 1000. The Extracellular portion of the chain corresponds to 1000-1006 (NRTDQPI). Residues 1007 to 1034 (ACAVFAALLHFFFLAAFTWMFLEGVQLY) form a helical membrane-spanning segment. Cysteine 1008 and cysteine 1080 are oxidised to a cystine. Residues 1035–1048 (IMLVEVFESEHSRR) are Cytoplasmic-facing. Residues 1049–1071 (KYFYLVGYGMPALIVAVSAAVDY) form a helical membrane-spanning segment. The Extracellular portion of the chain corresponds to 1072–1086 (RSYGTDKVCWLRLDT). The helical transmembrane segment at 1087–1112 (YFIWSFIGPATLIIMLNVIFLGIALY) threads the bilayer. Residues 1113–1142 (KMFHHTAILKPESGCLDNINYEDNRPFIKS) are Cytoplasmic-facing. Residues 1143–1163 (WVIGAIALLCLLGLTWAFGLM) form a helical membrane-spanning segment. Topologically, residues 1164-1168 (YINES) are extracellular. Asparagine 1166 carries an N-linked (GlcNAc...) asparagine glycan. A helical transmembrane segment spans residues 1169 to 1195 (TVIMAYLFTIFNSLQGMFIFIFHCVLQ). Residues 1196 to 1537 (KKVRKEYGKC…KGPAHLVTSL (342 aa)) are Cytoplasmic-facing. A disordered region spans residues 1213–1237 (GKSTESSIGSGKTSGSRTPGRYSTG). Serine 1254 and serine 1522 each carry phosphoserine. The segment at 1512-1537 (FIVPPNKDGASPEGTSKGPAHLVTSL) is disordered. The PDZ-binding signature appears at 1532 to 1537 (HLVTSL).

The protein belongs to the G-protein coupled receptor 2 family. LN-TM7 subfamily. In terms of assembly, heterodimer of 2 chains generated by proteolytic processing; the large extracellular N-terminal fragment and the membrane-bound C-terminal fragment predominantly remain associated and non-covalently linked. Interacts (via olfactomedin-like domain) with FLRT1 (via extracellular domain). Interacts (via olfactomedin-like domain) with FLRT2 (via extracellular domain). Interacts (via olfactomedin-like domain) with FLRT3 (via extracellular domain); the interaction is direct. Interacts (via extracellular domain) with TENM1. Interacts (via extracellular domain) with TENM2. Interacts (via extracellular domain) with TENM3. Identified in a complex with FLRT3 and UNC5B; does not interact with UNC5B by itself. Identified in a complex with FLRT3 and UNC5D; does not interact with UNC5D by itself. Interacts (via PDZ-binding motif) with SHANK3. Interacts (via PDZ-binding motif) with DLG4. In terms of processing, autoproteolytically processed at the GPS region of the GAIN-B domain; this cleavage modulates receptor activity. O-glycosylated (major) and N-glycosylated. In terms of tissue distribution, localizes to postsynaptic spines in non-overlapping dendritic domains of CA1-region pyramidal neurons: specifically localizes to excitatory synapses in the S.oriens and S.radiatum, corresponding to distinct presynaptic inputs onto CA1-region pyramidal neurons.

The protein localises to the cell membrane. The protein resides in the postsynaptic cell membrane. Its subcellular location is the cell projection. It localises to the axon. It is found in the cell junction. With respect to regulation, forms a heterodimer of 2 chains generated by proteolytic processing that remain associated through non-covalent interactions mediated by the GAIN-B domain. In the inactivated receptor, the Stachel sequence (also named stalk) is embedded in the GAIN-B domain, where it adopts a beta-strand conformation. On activation, the Stachel moves into the 7 transmembrane region and adopts a twisted hook-shaped configuration that forms contacts within the receptor, leading to coupling of a G-alpha protein, which activates signaling. The cleaved GAIN-B and N-terminal domains can then dissociate from the rest of the receptor. Its function is as follows. Orphan adhesion G-protein coupled receptor (aGPCR), which mediates synapse specificity. Ligand binding causes a conformation change that triggers signaling via guanine nucleotide-binding proteins (G proteins) and modulates the activity of downstream effectors. ADGRL3 is coupled with different classes of G alpha proteins, such as G(12)/G(13), G(s), G(i) or G(q), depending on the context. Coupling to G(12)/G(13) G proteins, which mediates the activation Rho small GTPases is the most efficient. Following G-protein coupled receptor activation, associates with cell adhesion molecules that are expressed at the surface of adjacent cells to direct synapse specificity. Specifically mediates the establishment of Schaffer-collateral synapses formed by CA3-region axons on CA1-region pyramidal neurons in the hippocampus. Localizes to postsynaptic spines in excitatory synapses in the S.oriens and S.radiatum and interacts with presynaptic cell adhesion molecules FLRT3 and TENM2, promoting synapse formation. Plays a role in the development of glutamatergic synapses in the cortex. Important in determining the connectivity rates between the principal neurons in the cortex. In terms of biological role, orphan adhesion G-protein coupled receptor (aGPCR), which mediates synapse specificity. Ligand binding causes a conformation change that triggers signaling via guanine nucleotide-binding proteins (G proteins) and modulates the activity of downstream effectors, such as adenylate cyclase. Isoform 1 is specifically coupled to G(s) G proteins and mediates activation of adenylate cyclase activity. Following G-protein coupled receptor activation, undergoes liquid-liquid phase transition, associates with (1) cell adhesion molecules that are expressed at the surface of adjacent cells, as well as (2) PDZ-containing proteins, such as SHANK3 and DLG4, in the cytoplasm to direct synapse formation. Functionally, orphan adhesion G-protein coupled receptor (aGPCR). Ligand binding causes a conformation change that triggers signaling via guanine nucleotide-binding proteins (G proteins) and modulates the activity of downstream effectors, such as RhoA pathway. Isoform 7 is coupled to G(12) and/or G(13) G proteins (GNA12 and GNA13, respectively) and mediates the activation Rho small GTPases. This is Adhesion G protein-coupled receptor L3 from Mus musculus (Mouse).